The chain runs to 226 residues: Ribonuclease 3 (226 aa).

An RNase III domain is found at 6–128; the sequence is FNKLQKKMGY…IIGGIFLDSN (123 aa). A Mg(2+)-binding site is contributed by Glu41. Residue Asp45 is part of the active site. Mg(2+) is bound by residues Asn114 and Glu117. The active site involves Glu117. Positions 155–225 constitute a DRBM domain; it reads DPKTRLQEYL…AKQALLLFNI (71 aa).

It belongs to the ribonuclease III family. Homodimer. Mg(2+) is required as a cofactor.

It is found in the cytoplasm. It carries out the reaction Endonucleolytic cleavage to 5'-phosphomonoester.. Digests double-stranded RNA. Involved in the processing of primary rRNA transcript to yield the immediate precursors to the large and small rRNAs (23S and 16S). Processes some mRNAs, and tRNAs when they are encoded in the rRNA operon. Processes pre-crRNA and tracrRNA of type II CRISPR loci if present in the organism. The protein is Ribonuclease 3 of Wigglesworthia glossinidia brevipalpis.